A 315-amino-acid polypeptide reads, in one-letter code: Cytosolic Fe-S cluster assembly factor nubp1-A (315 aa).

The segment at 1-23 is disordered; it reads MADIPDNAPQHCPGTDSTEAGKS. [4Fe-4S] cluster is bound by residues Cys12, Cys26, Cys29, and Cys35. Residue 66–73 participates in ATP binding; that stretch reads GKGGVGKS. Cys239 and Cys242 together coordinate [4Fe-4S] cluster.

It belongs to the Mrp/NBP35 ATP-binding proteins family. NUBP1/NBP35 subfamily. In terms of assembly, heterotetramer of 2 nubp1 and 2 nubp2 chains. [4Fe-4S] cluster serves as cofactor.

It localises to the cytoplasm. Its function is as follows. Component of the cytosolic iron-sulfur (Fe/S) protein assembly (CIA) machinery. Required for maturation of extramitochondrial Fe-S proteins. The nubp1-nubp2 heterotetramer forms a Fe-S scaffold complex, mediating the de novo assembly of an Fe-S cluster and its transfer to target apoproteins. In Xenopus laevis (African clawed frog), this protein is Cytosolic Fe-S cluster assembly factor nubp1-A (nubp1-A).